Consider the following 395-residue polypeptide: Hdr-like menaquinol oxidoreductase integral membrane subunit (395 aa).

A run of 10 helical transmembrane segments spans residues Tyr15–Leu35, Ile57–Phe77, Ile88–Ile108, Ile126–Leu146, Phe158–Tyr178, Phe196–Phe216, Leu231–Leu251, Val274–Leu294, Ile305–Ile325, and Ile364–Ile384.

The protein belongs to the NrfD family. Consists of five subunits: an integral membrane subunit, a cytochrome b-like subunit, a cytochrome c subunit and two iron-sulfur subunits.

The protein resides in the cell membrane. Its function is as follows. Has menaquinol-oxidizing activity. HmeB subunit may function as a menaquinol-oxidizing site. HmeA, HmeB and HmeE subunits may together catalyze electron transfer from menaquinol to cytochrome c. The polypeptide is Hdr-like menaquinol oxidoreductase integral membrane subunit (hmeB) (Archaeoglobus fulgidus (strain ATCC 49558 / DSM 4304 / JCM 9628 / NBRC 100126 / VC-16)).